The chain runs to 213 residues: 3-isopropylmalate dehydratase small subunit (213 aa).

The protein belongs to the LeuD family. LeuD type 1 subfamily. In terms of assembly, heterodimer of LeuC and LeuD.

It catalyses the reaction (2R,3S)-3-isopropylmalate = (2S)-2-isopropylmalate. The protein operates within amino-acid biosynthesis; L-leucine biosynthesis; L-leucine from 3-methyl-2-oxobutanoate: step 2/4. In terms of biological role, catalyzes the isomerization between 2-isopropylmalate and 3-isopropylmalate, via the formation of 2-isopropylmaleate. This is 3-isopropylmalate dehydratase small subunit from Pseudomonas syringae pv. tomato (strain ATCC BAA-871 / DC3000).